Reading from the N-terminus, the 198-residue chain is uncharacterized protein (198 aa).

Positions 20-58 (ERVRRDEELARLSADKEQAKNDLEESKRRIARLRGTVYE) form a coiled coil. Residues 144–198 (LSNRKTKNPESDRRRQSRKKKSTQIQASDEMKHRRHHVHKVHHYSQKQSSSTTRR) are disordered. Over residues 176-188 (HRRHHVHKVHHYS) the composition is skewed to basic residues. Positions 189 to 198 (QKQSSSTTRR) are enriched in polar residues.

The protein localises to the nucleus. Its subcellular location is the nucleolus. This is an uncharacterized protein from Schizosaccharomyces pombe (strain 972 / ATCC 24843) (Fission yeast).